The sequence spans 205 residues: Phosphoribosyl-dephospho-CoA transferase (205 aa).

Residues D134 and D136 contribute to the active site.

Belongs to the MdcG family.

The enzyme catalyses apo-[malonate decarboxylase ACP] + 2'-(5''-triphospho-alpha-D-ribosyl)-3'-dephospho-CoA = holo-[malonate decarboxylase ACP] + diphosphate. In terms of biological role, transfers 2'-(5-triphosphoribosyl)-3'-dephosphocoenzyme-A to the apo-[acyl-carrier-protein] of the malonate decarboxylase to yield holo-[acyl-carrier-protein]. In Klebsiella pneumoniae subsp. pneumoniae (strain ATCC 700721 / MGH 78578), this protein is Phosphoribosyl-dephospho-CoA transferase.